The sequence spans 166 residues: Small ribosomal subunit protein uS5 (166 aa).

The S5 DRBM domain occupies 11–74 (LIEKLITVNR…EKARRNMVTV (64 aa)).

The protein belongs to the universal ribosomal protein uS5 family. Part of the 30S ribosomal subunit. Contacts proteins S4 and S8.

Functionally, with S4 and S12 plays an important role in translational accuracy. In terms of biological role, located at the back of the 30S subunit body where it stabilizes the conformation of the head with respect to the body. The chain is Small ribosomal subunit protein uS5 from Idiomarina loihiensis (strain ATCC BAA-735 / DSM 15497 / L2-TR).